A 354-amino-acid polypeptide reads, in one-letter code: Biotin synthase (354 aa).

The Radical SAM core domain maps to 64–282 (GDVELATLLS…IAVARITMPR (219 aa)). [4Fe-4S] cluster is bound by residues Cys-79, Cys-83, and Cys-86. Positions 123, 154, 214, and 286 each coordinate [2Fe-2S] cluster.

It belongs to the radical SAM superfamily. Biotin synthase family. Homodimer. [4Fe-4S] cluster is required as a cofactor. Requires [2Fe-2S] cluster as cofactor.

The enzyme catalyses (4R,5S)-dethiobiotin + (sulfur carrier)-SH + 2 reduced [2Fe-2S]-[ferredoxin] + 2 S-adenosyl-L-methionine = (sulfur carrier)-H + biotin + 2 5'-deoxyadenosine + 2 L-methionine + 2 oxidized [2Fe-2S]-[ferredoxin]. Its pathway is cofactor biosynthesis; biotin biosynthesis; biotin from 7,8-diaminononanoate: step 2/2. Catalyzes the conversion of dethiobiotin (DTB) to biotin by the insertion of a sulfur atom into dethiobiotin via a radical-based mechanism. The polypeptide is Biotin synthase (Paracidovorax citrulli (strain AAC00-1) (Acidovorax citrulli)).